Consider the following 480-residue polypeptide: Molybdate-anion transporter (480 aa).

Transmembrane regions (helical) follow at residues 1 to 21 (MFVT…GLEL), 44 to 63 (ATFL…QGPY), 78 to 98 (IAIL…FSGW), 129 to 149 (FVLI…TTTF), 177 to 197 (TWNH…AEWL), 199 to 219 (LGPV…AWFV), 274 to 294 (VMLL…FIFL), 304 to 324 (SPLG…SLLF), 339 to 359 (VLCV…FSTV), 369 to 389 (FLAF…LNFL), 401 to 421 (SVLA…LLAL), and 441 to 461 (FGGC…LFTL).

The protein belongs to the major facilitator superfamily.

It is found in the cell membrane. Its function is as follows. Mediates high-affinity intracellular uptake of the rare oligo-element molybdenum. The sequence is that of Molybdate-anion transporter (mfsd5) from Takifugu rubripes (Japanese pufferfish).